Consider the following 334-residue polypeptide: Ornithine carbamoyltransferase (334 aa).

Carbamoyl phosphate contacts are provided by residues 56–59, glutamine 83, arginine 107, and 134–137; these read STRT and HPTQ. L-ornithine-binding positions include asparagine 168, aspartate 232, and 236–237; that span reads SM. Residues 274–275 and arginine 320 contribute to the carbamoyl phosphate site; that span reads CL.

Belongs to the aspartate/ornithine carbamoyltransferase superfamily. OTCase family.

It localises to the cytoplasm. It catalyses the reaction carbamoyl phosphate + L-ornithine = L-citrulline + phosphate + H(+). Its pathway is amino-acid biosynthesis; L-arginine biosynthesis; L-arginine from L-ornithine and carbamoyl phosphate: step 1/3. In terms of biological role, reversibly catalyzes the transfer of the carbamoyl group from carbamoyl phosphate (CP) to the N(epsilon) atom of ornithine (ORN) to produce L-citrulline. In Shigella sonnei (strain Ss046), this protein is Ornithine carbamoyltransferase.